Consider the following 312-residue polypeptide: Malate dehydrogenase (312 aa).

NAD(+) contacts are provided by residues 7-13 (GAAGGIG) and Asp-34. Substrate-binding residues include Arg-81 and Arg-87. NAD(+) contacts are provided by residues Asn-94 and 117–119 (ITN). Substrate contacts are provided by Asn-119 and Arg-153. His-177 serves as the catalytic Proton acceptor. Met-227 contributes to the NAD(+) binding site.

This sequence belongs to the LDH/MDH superfamily. MDH type 1 family. Homodimer.

The enzyme catalyses (S)-malate + NAD(+) = oxaloacetate + NADH + H(+). In terms of biological role, catalyzes the reversible oxidation of malate to oxaloacetate. This Enterobacter sp. (strain 638) protein is Malate dehydrogenase.